A 315-amino-acid chain; its full sequence is Methionyl-tRNA formyltransferase (315 aa).

A (6S)-5,6,7,8-tetrahydrofolate-binding site is contributed by 109-112 (SLLP).

It belongs to the Fmt family.

The catalysed reaction is L-methionyl-tRNA(fMet) + (6R)-10-formyltetrahydrofolate = N-formyl-L-methionyl-tRNA(fMet) + (6S)-5,6,7,8-tetrahydrofolate + H(+). Functionally, attaches a formyl group to the free amino group of methionyl-tRNA(fMet). The formyl group appears to play a dual role in the initiator identity of N-formylmethionyl-tRNA by promoting its recognition by IF2 and preventing the misappropriation of this tRNA by the elongation apparatus. This chain is Methionyl-tRNA formyltransferase, found in Lachnospira eligens (strain ATCC 27750 / DSM 3376 / VPI C15-48 / C15-B4) (Eubacterium eligens).